The following is a 78-amino-acid chain: Antimicrobial peptide marcin-18 (78 aa).

The signal sequence occupies residues 1–23 (MQFKKQLMVIFLAYFLVVNESEA). Position 41 is an arginine amide (Arg41). Positions 42 to 78 (RKNQRSRSIMKRDLENLFDPYQRNLELDRLLKQLPNY) are excised as a propeptide.

This sequence belongs to the non-disulfide-bridged peptide (NDBP) superfamily. Medium-length antimicrobial peptide (group 3) family. In terms of tissue distribution, expressed by the venom gland.

The protein localises to the secreted. The protein resides in the target cell membrane. Functionally, antimicrobial peptide with potent activity against bacteria. Acts by fastly disrupting the bacterial membrane. Shows activity against Gram-positive bacteria S.aureus (MIC=1.5-2.9 uM) and S.epidermidis (MIC=2.9 uM), M.luteus (MIC=23.4 uM), B.thuringiensis (MIC=2.9 uM), B.subtilis (MIC=2.9 uM) and Gram-negative bacteria E.coli (MIC=5.9-11.7 uM) and P.aeruginosa (MIC=5.9 uM), as well as against penicillin (MIC=2.9 uM) and methicillin (MIC=1.5-2.9 uM) resistant bacteria. Antibiotic activity is not affected by major negatively charged components of the prokaryotic cell wall (e.g. lipopolysaccharides and lipoteichoic acid). In vivo, in a mouse model of lethal peritonitis, shows potent antibiotic activity without cytotoxicity, improving the survival rate. In Olivierus martensii (Manchurian scorpion), this protein is Antimicrobial peptide marcin-18.